The following is a 292-amino-acid chain: N-acetylneuraminate lyase (292 aa).

Positions 47 and 48 each coordinate aceneuramate. Tyr136 functions as the Proton donor in the catalytic mechanism. Lys164 functions as the Schiff-base intermediate with substrate in the catalytic mechanism. Residues Thr166, Gly188, Asp190, Glu191, and Ser207 each coordinate aceneuramate.

It belongs to the DapA family. NanA subfamily. In terms of assembly, homotetramer.

Its subcellular location is the cytoplasm. It carries out the reaction aceneuramate = aldehydo-N-acetyl-D-mannosamine + pyruvate. Its pathway is amino-sugar metabolism; N-acetylneuraminate degradation; D-fructose 6-phosphate from N-acetylneuraminate: step 1/5. Catalyzes the reversible aldol cleavage of N-acetylneuraminic acid (sialic acid; Neu5Ac) to form pyruvate and N-acetylmannosamine (ManNAc) via a Schiff base intermediate. The polypeptide is N-acetylneuraminate lyase (Actinobacillus pleuropneumoniae serotype 3 (strain JL03)).